Here is an 819-residue protein sequence, read N- to C-terminus: Plastid division protein CDP1, chloroplastic (819 aa).

Residues 1–76 constitute a chloroplast transit peptide; that stretch reads MPVAYTFPVL…NAAGGGIHVV (76 aa). Residues 77-572 lie on the Stromal side of the membrane; the sequence is DNAPSRTSSL…NKIWDEWLSQ (496 aa). Residues 419–439 adopt a coiled-coil conformation; the sequence is EAEALEKLKQLESNSDSAVRN. Residues 573–593 form a helical membrane-spanning segment; it reads SSLIGRVSVVALLGCTVFFSL. At 594 to 819 the chain is on the chloroplast intermembrane side; it reads KLSGIRSGRL…FCQSDIQIQK (226 aa). The stretch at 762–782 forms a coiled coil; sequence IAGEAAEIEALLEEAAELVDE.

Self-interacts. Interacts (via N-terminus) with ARC3 (via MORN domains). Binds (via N-terminus) to FTSZ2 proteins, FTSZ2-1 and FTSZ2-2. Recruited ARC3 to the middle of the plastid where subsequent complex made of CDP1/PARC6, ARC3 and FtsZ proteins can form; this complex enhances the dynamics of Z rings during chloroplast division. Interacts (via C-terminus) with PDV1 (via C-terminus). Interacts with MIND1. As to expression, exclusively expressed in young green tissues such as young cotyledons, shoot apex, emerging leaves and budding inflorescence.

It localises to the plastid. Its subcellular location is the chloroplast inner membrane. In terms of biological role, component of the plastid division machinery required for PDV1 localization to constriction sites. Involved in chloroplast division site placement. Required for the proper formation of FtsZ rings at the division site in nongreen plastids (e.g. etioplasts). Inhibits FtsZ assembly, functioning as an antagonistic regulator of FtsZ dynamics against ARC6, by recruiting ARC3 to the middle of the plastid to facilitate its interaction with FtsZ proteins. Required during stromule biogenesis in the leaf epidermis, especially in non-mesophyll cells plastids. In Arabidopsis thaliana (Mouse-ear cress), this protein is Plastid division protein CDP1, chloroplastic.